A 218-amino-acid polypeptide reads, in one-letter code: Ribose-5-phosphate isomerase A (218 aa).

Residues 28 to 31, 81 to 84, and 94 to 97 contribute to the substrate site; these read TGST, DGAD, and KGGG. Glu-103 functions as the Proton acceptor in the catalytic mechanism. Residue Lys-121 participates in substrate binding.

This sequence belongs to the ribose 5-phosphate isomerase family. Homodimer.

The catalysed reaction is aldehydo-D-ribose 5-phosphate = D-ribulose 5-phosphate. Its pathway is carbohydrate degradation; pentose phosphate pathway; D-ribose 5-phosphate from D-ribulose 5-phosphate (non-oxidative stage): step 1/1. In terms of biological role, catalyzes the reversible conversion of ribose-5-phosphate to ribulose 5-phosphate. The protein is Ribose-5-phosphate isomerase A of Colwellia psychrerythraea (strain 34H / ATCC BAA-681) (Vibrio psychroerythus).